Here is a 158-residue protein sequence, read N- to C-terminus: ABA-responsive protein ABR18 (158 aa).

This sequence belongs to the BetVI family.

The chain is ABA-responsive protein ABR18 from Pisum sativum (Garden pea).